Here is a 171-residue protein sequence, read N- to C-terminus: Large ribosomal subunit protein uL10 (171 aa).

It belongs to the universal ribosomal protein uL10 family. As to quaternary structure, part of the ribosomal stalk of the 50S ribosomal subunit. The N-terminus interacts with L11 and the large rRNA to form the base of the stalk. The C-terminus forms an elongated spine to which L12 dimers bind in a sequential fashion forming a multimeric L10(L12)X complex.

In terms of biological role, forms part of the ribosomal stalk, playing a central role in the interaction of the ribosome with GTP-bound translation factors. The polypeptide is Large ribosomal subunit protein uL10 (rplJ) (Lactococcus lactis subsp. lactis (strain IL1403) (Streptococcus lactis)).